A 79-amino-acid polypeptide reads, in one-letter code: Acyl carrier protein (79 aa).

Positions S2–K77 constitute a Carrier domain. S37 carries the post-translational modification O-(pantetheine 4'-phosphoryl)serine.

It belongs to the acyl carrier protein (ACP) family. 4'-phosphopantetheine is transferred from CoA to a specific serine of apo-ACP by AcpS. This modification is essential for activity because fatty acids are bound in thioester linkage to the sulfhydryl of the prosthetic group.

The protein resides in the cytoplasm. Its pathway is lipid metabolism; fatty acid biosynthesis. Its function is as follows. Carrier of the growing fatty acid chain in fatty acid biosynthesis. The protein is Acyl carrier protein of Acidiphilium cryptum (strain JF-5).